Consider the following 347-residue polypeptide: Phenylalanine--tRNA ligase alpha subunit (347 aa).

A Mg(2+)-binding site is contributed by E262.

This sequence belongs to the class-II aminoacyl-tRNA synthetase family. Phe-tRNA synthetase alpha subunit type 1 subfamily. As to quaternary structure, tetramer of two alpha and two beta subunits. Mg(2+) serves as cofactor.

Its subcellular location is the cytoplasm. It carries out the reaction tRNA(Phe) + L-phenylalanine + ATP = L-phenylalanyl-tRNA(Phe) + AMP + diphosphate + H(+). The protein is Phenylalanine--tRNA ligase alpha subunit of Roseiflexus sp. (strain RS-1).